Here is a 203-residue protein sequence, read N- to C-terminus: Outer-membrane lipoprotein carrier protein (203 aa).

An N-terminal signal peptide occupies residues 1–21 (MKKLAITCALLSGMVVSQVWA). The tract at residues 184–203 (DASKFTFTPPKGVTVDDQRK) is disordered.

It belongs to the LolA family. Monomer.

Its subcellular location is the periplasm. In terms of biological role, participates in the translocation of lipoproteins from the inner membrane to the outer membrane. Only forms a complex with a lipoprotein if the residue after the N-terminal Cys is not an aspartate (The Asp acts as a targeting signal to indicate that the lipoprotein should stay in the inner membrane). The protein is Outer-membrane lipoprotein carrier protein of Klebsiella pneumoniae (strain 342).